Consider the following 75-residue polypeptide: OcyC3 (75 aa).

The signal sequence occupies residues 1 to 22 (MQYKTFLVISLAYLLVADEAAA). Residues 51-75 (EINNVFEPYHENLDLELERFLSQLQ) constitute a propeptide that is removed on maturation.

In terms of tissue distribution, expressed by the venom gland.

The protein localises to the secreted. The protein resides in the target cell membrane. Functionally, amphipathic peptide with probable antimicrobial activity. May act by disrupting the integrity of the bacterial cell membrane. This Opisthacanthus cayaporum (South American scorpion) protein is OcyC3.